The primary structure comprises 157 residues: Ubiquitin-like protein 4A (157 aa).

The region spanning 1–76 (MQLTVKALQG…LNLVVKPLEK (76 aa)) is the Ubiquitin-like domain. Lys-48 is covalently cross-linked (Glycyl lysine isopeptide (Lys-Gly) (interchain with G-Cter in ubiquitin)). The residue at position 90 (Ser-90) is a Phosphoserine. Residues 96 to 138 (WQLISKVLARHFSAADASRVLEQLQRDYERSLSRLTLDDIERL) form a required and sufficient for interaction with BAG6 region.

Component of the BAG6/BAT3 complex, at least composed of BAG6, UBL4A and GET4/TRC35. Interacts with BAG6; the interaction is direct and required for UBL4A protein stability. Interacts with USP13; may be indirect via BAG6. Polyubiquitinated. Ubiquitination by AMFR and deubiquitination by USP13 may regulate the interaction between the BAG6/BAT3 complex and SGTA and therefore may regulate client proteins fate.

It localises to the cytoplasm. It is found in the cytosol. The protein localises to the nucleus. In terms of biological role, as part of a cytosolic protein quality control complex, the BAG6/BAT3 complex, maintains misfolded and hydrophobic patches-containing proteins in a soluble state and participates in their proper delivery to the endoplasmic reticulum or alternatively can promote their sorting to the proteasome where they undergo degradation. The BAG6/BAT3 complex is involved in the post-translational delivery of tail-anchored/type II transmembrane proteins to the endoplasmic reticulum membrane. Recruited to ribosomes, it interacts with the transmembrane region of newly synthesized tail-anchored proteins and together with SGTA and ASNA1 mediates their delivery to the endoplasmic reticulum. Client proteins that cannot be properly delivered to the endoplasmic reticulum are ubiquitinated and sorted to the proteasome. Similarly, the BAG6/BAT3 complex also functions as a sorting platform for proteins of the secretory pathway that are mislocalized to the cytosol either delivering them to the proteasome for degradation or to the endoplasmic reticulum. The BAG6/BAT3 complex also plays a role in the endoplasmic reticulum-associated degradation (ERAD), a quality control mechanism that eliminates unwanted proteins of the endoplasmic reticulum through their retrotranslocation to the cytosol and their targeting to the proteasome. It maintains these retrotranslocated proteins in an unfolded yet soluble state condition in the cytosol to ensure their proper delivery to the proteasome. This chain is Ubiquitin-like protein 4A, found in Homo sapiens (Human).